The chain runs to 617 residues: RNA polymerase sigma factor RpoD (617 aa).

Positions P170 to E220 are disordered. Positions N184 to K195 are enriched in basic and acidic residues. The span at D196–P218 shows a compositional bias: acidic residues. Residues M383–T453 are sigma-70 factor domain-2. Positions D407 to Q410 match the Interaction with polymerase core subunit RpoC motif. Residues E462–M538 are sigma-70 factor domain-3. The segment at V551–H604 is sigma-70 factor domain-4. A DNA-binding region (H-T-H motif) is located at residues L577–A596.

Belongs to the sigma-70 factor family. RpoD/SigA subfamily. In terms of assembly, interacts transiently with the RNA polymerase catalytic core.

The protein resides in the cytoplasm. Sigma factors are initiation factors that promote the attachment of RNA polymerase to specific initiation sites and are then released. This sigma factor is the primary sigma factor during exponential growth. The polypeptide is RNA polymerase sigma factor RpoD (Pseudomonas aeruginosa (strain ATCC 15692 / DSM 22644 / CIP 104116 / JCM 14847 / LMG 12228 / 1C / PRS 101 / PAO1)).